The following is a 364-amino-acid chain: Methylthioribose-1-phosphate isomerase (364 aa).

Aspartate 246 acts as the Proton donor in catalysis.

Belongs to the eIF-2B alpha/beta/delta subunits family. MtnA subfamily.

The protein resides in the cytoplasm. It is found in the nucleus. It catalyses the reaction 5-(methylsulfanyl)-alpha-D-ribose 1-phosphate = 5-(methylsulfanyl)-D-ribulose 1-phosphate. It functions in the pathway amino-acid biosynthesis; L-methionine biosynthesis via salvage pathway; L-methionine from S-methyl-5-thio-alpha-D-ribose 1-phosphate: step 1/6. Functionally, catalyzes the interconversion of methylthioribose-1-phosphate (MTR-1-P) into methylthioribulose-1-phosphate (MTRu-1-P). In Bombyx mori (Silk moth), this protein is Methylthioribose-1-phosphate isomerase.